The following is a 675-amino-acid chain: DNA ligase (675 aa).

Residues 34–38 (DAEYD), 83–84 (SL), and Glu-116 contribute to the NAD(+) site. Lys-118 (N6-AMP-lysine intermediate) is an active-site residue. NAD(+)-binding residues include Arg-139, Glu-176, Lys-293, and Lys-317. Zn(2+) is bound by residues Cys-411, Cys-414, Cys-429, and Cys-435. The 82-residue stretch at 594–675 (AGENPFKGKT…FLAIVNAYKR (82 aa)) folds into the BRCT domain.

This sequence belongs to the NAD-dependent DNA ligase family. LigA subfamily. Mg(2+) serves as cofactor. The cofactor is Mn(2+).

It catalyses the reaction NAD(+) + (deoxyribonucleotide)n-3'-hydroxyl + 5'-phospho-(deoxyribonucleotide)m = (deoxyribonucleotide)n+m + AMP + beta-nicotinamide D-nucleotide.. Its function is as follows. DNA ligase that catalyzes the formation of phosphodiester linkages between 5'-phosphoryl and 3'-hydroxyl groups in double-stranded DNA using NAD as a coenzyme and as the energy source for the reaction. It is essential for DNA replication and repair of damaged DNA. This Mannheimia succiniciproducens (strain KCTC 0769BP / MBEL55E) protein is DNA ligase.